Here is a 128-residue protein sequence, read N- to C-terminus: Glyoxylase-like domain-containing protein (128 aa).

Residues 6–125 (QISGIEIPAT…EGNTHAICTR (120 aa)) enclose the VOC domain.

It participates in mycotoxin biosynthesis. Glyoxylase-like domain-containing protein; part of the gene cluster that mediates the biosynthesis of the selective antifungal agent ascochitine, an o-quinone methide that plays a possible protective role against other microbial competitors in nature and is considered to be important for pathogenicity of legume-associated Didymella species. The pathway probably begins with the synthesis of a keto-aldehyde intermediate by the ascochitine non-reducing polyketide synthase pksAC from successive condensations of 4 malonyl-CoA units, presumably with a simple acetyl-CoA starter unit. Release of the keto-aldehyde intermediate is consistent with the presence of the C-terminal reductive release domain. The HR-PKS (orf7) probably makes a diketide starter unit which is passed to the non-reducing polyketide synthase pksAC for further extension, producing ascochital and ascochitine. The aldehyde dehydrogenase (orf1), the 2-oxoglutarate-dependent dioxygenase (orf3) and the dehydrogenase (orf9) are probably involved in subsequent oxidations of methyl groups to the carboxylic acid of the heterocyclic ring. The ascochitine gene cluster also includes a gene encoding a short peptide with a cupin domain (orf2) that is often found in secondary metabolite gene clusters and which function has still to be determined. This chain is Glyoxylase-like domain-containing protein, found in Didymella fabae (Leaf and pod spot disease fungus).